The chain runs to 72 residues: Potassium channel toxin epsilon-KTx 1.1 (72 aa).

An N-terminal signal peptide occupies residues 1 to 30; the sequence is MKLSCGFLLILLVLSAMIATFSEVEAMKPS. 4 cysteine pairs are disulfide-bonded: C34–C42, C37–C58, C41–C51, and C46–C56. The propeptide occupies 60–72; that stretch reads GRSDLNDELEKYQ.

Belongs to the short scorpion toxin superfamily. Potassium channel inhibitor family. Epsilon-KTx 01 subfamily. As to expression, expressed by the venom gland.

The protein localises to the secreted. Potassium channel blocker. At 3 uM, this toxin blocks voltage-independently voltage-gated potassium channels rKv1.2/KCNA2 (25%), hKv1.3/KCNA3 (27%), rKv4.2/KCND2 (25%), Kv10.1/KCNH1/EAG1 (15%), Kv11/hERG (12%), and Shaker-IR (10%). On hKv1.3/KCNA3, the IC(50) is 17.1 +-3.3 uM. This Tityus serrulatus (Brazilian scorpion) protein is Potassium channel toxin epsilon-KTx 1.1.